A 335-amino-acid polypeptide reads, in one-letter code: Protein-arginine kinase (335 aa).

The Phosphagen kinase C-terminal domain occupies 21–244; sequence VIISSRIRLA…NQIINEEKQI (224 aa). Residues 24–28, H82, R115, 166–170, and 197–202 contribute to the ATP site; these read SSRIR, RASVM, and RGIYGE.

It belongs to the ATP:guanido phosphotransferase family.

The catalysed reaction is L-arginyl-[protein] + ATP = N(omega)-phospho-L-arginyl-[protein] + ADP + H(+). Functionally, catalyzes the specific phosphorylation of arginine residues in proteins. This chain is Protein-arginine kinase, found in Staphylococcus epidermidis (strain ATCC 12228 / FDA PCI 1200).